A 1393-amino-acid polypeptide reads, in one-letter code: Polarized growth protein RAX2 (1393 aa).

A signal peptide spans 1-21 (MLVQFQQLLLLLISIIKLCQA). Residues 22 to 1329 (DDNDNSFFQP…TNKNLSRGKV (1308 aa)) lie on the Extracellular side of the membrane. Asn62, Asn85, Asn105, Asn125, Asn133, Asn139, Asn164, Asn186, Asn195, Asn212, Asn256, Asn260, Asn266, Asn269, Asn362, Asn398, Asn405, Asn479, Asn536, Asn542, Asn565, Asn599, Asn646, Asn649, Asn653, Asn674, Asn689, Asn696, Asn702, Asn714, Asn747, Asn764, Asn768, Asn792, Asn829, Asn863, Asn899, Asn935, Asn946, Asn958, Asn985, Asn1020, Asn1030, Asn1041, Asn1213, Asn1232, Asn1262, and Asn1323 each carry an N-linked (GlcNAc...) asparagine glycan. A helical transmembrane segment spans residues 1330 to 1350 (VGISLACALGSTTLLGLLYII). The Cytoplasmic segment spans residues 1351–1393 (PYFALFKNRKDGYFQPERIHEDEMMDAVNPEDLLHEIDLQREK).

This sequence belongs to the RAX2 family.

Its subcellular location is the cell membrane. The protein localises to the cell tip. Required for establishing sites of emergence of yeast and hyphal daughters and for maintaining the linearity of hyphal growth, but not involved in responses that require a reorientation of the direction of already established hyphal growth (tropisms). Does not play a role in penetration or injury of human epithelial cells. This chain is Polarized growth protein RAX2, found in Candida albicans (strain SC5314 / ATCC MYA-2876) (Yeast).